The following is an 84-amino-acid chain: Cell division topological specificity factor (84 aa).

This sequence belongs to the MinE family.

Prevents the cell division inhibition by proteins MinC and MinD at internal division sites while permitting inhibition at polar sites. This ensures cell division at the proper site by restricting the formation of a division septum at the midpoint of the long axis of the cell. This is Cell division topological specificity factor from Pseudomonas fluorescens (strain SBW25).